The primary structure comprises 133 residues: Bacteriohemerythrin (133 aa).

The Fe cation site is built by His-19, His-56, Glu-60, His-75, His-79, His-115, and Asp-120.

This sequence belongs to the hemerythrin family. Monomer.

Oxygen-binding protein. May be involved in a storage mechanism or for delivery to oxygen-requiring enzymes. The oxygen-binding site contains two iron atoms. The sequence is that of Bacteriohemerythrin from Campylobacter jejuni subsp. jejuni serotype O:23/36 (strain 81-176).